The primary structure comprises 367 residues: Trans-enoyl reductase ffsC (367 aa).

NADP(+) is bound at residue 55–58; sequence CDWK. A substrate-binding site is contributed by 143-150; the sequence is TGIGTLGL. Residues 203–206, Y221, and 268–269 contribute to the NADP(+) site; these read SAKN and LE. Substrate is bound at residue 288-292; it reads GMAIL. Residue 357–358 coordinates NADP(+); that stretch reads VS.

This sequence belongs to the zinc-containing alcohol dehydrogenase family. In terms of assembly, monomer.

The protein operates within mycotoxin biosynthesis. In terms of biological role, trans-enoyl reductase; part of the gene cluster that mediates the biosynthesis of the cytotoxic leucine-containing cytochalasans, including aspochalasin C, aspochalasin E, TMC-169, flavichalasine F, aspergillin PZ, aspochalasin M and flavichalasine G. The first step in the pathway is catalyzed by the hybrid PKS-NRPS ffsA that utilizes 8 units of malonyl-CoA to iteratively assemble the octaketide chain before addition of L-leucine by the C-terminal NRPS modules. Because ffsA lacks a designated enoylreductase (ER) domain, the required activity is provided the enoyl reductase fssC. The methyltransferase (MT) domain of ffsA catalyzes the alpha-methylation at C10 and C14 using S-adenosyl-L-methionine as the methyl-donating cosubstrate. Reduction by the hydrolyase ffsE, followed by dehydration and intra-molecular Diels-Alder cyclization by the Diels-Alderase ffsF then yield the required isoindolone-fused macrocycle. A number of oxidative steps catalyzed by the tailoring cytochrome P450 monooxygenase ffsD, the FAD-linked oxidoreductase ffsJ and the short-chain dehydrogenase/reductase ffsI, are further required to afford the final products. This chain is Trans-enoyl reductase ffsC, found in Aspergillus flavipes.